We begin with the raw amino-acid sequence, 232 residues long: Ion-translocating oxidoreductase complex subunit E (232 aa).

A run of 6 helical transmembrane segments spans residues 18-38 (GLVQLLGLCPLLAVTATLTNA), 39-59 (LGLGVATMLVLIGSNILVSLV), 69-89 (IPVFVMIIAALVTAVQLLINA), 93-113 (GLYLSLGIFLPLIVTNCIIIG), 127-147 (AAFDGLMMGLGFTLVLAVLGA), and 182-202 (PFLLAMLPPGAFIVMGLLIAL).

The protein belongs to the NqrDE/RnfAE family. The complex is composed of six subunits: RnfA, RnfB, RnfC, RnfD, RnfE and RnfG.

It is found in the cell inner membrane. In terms of biological role, part of a membrane-bound complex that couples electron transfer with translocation of ions across the membrane. In Shewanella sp. (strain MR-4), this protein is Ion-translocating oxidoreductase complex subunit E.